A 154-amino-acid polypeptide reads, in one-letter code: uncharacterized protein (154 aa).

This sequence belongs to the MG032/MG096/MG288 family.

This is an uncharacterized protein from Mycoplasma pneumoniae (strain ATCC 29342 / M129 / Subtype 1) (Mycoplasmoides pneumoniae).